The chain runs to 964 residues: Translation initiation factor IF-2 (964 aa).

The disordered stretch occupies residues 35-353; it reads ASSTIEPPVV…RQKRNEYESM (319 aa). Residues 64–108 show a composition bias toward low complexity; that stretch reads KPTPAKPAAKPGAPAPKPGTAQKPTAPTPGAVAAPKPGTAAAKPT. Pro residues predominate over residues 124–133; the sequence is PAKPTAPKPA. Basic and acidic residues predominate over residues 145–155; the sequence is AAKKAAEDKAT. A compositionally biased stretch (pro residues) spans 166–178; sequence NAMPRPMAKPGPK. Low complexity predominate over residues 220-233; it reads PRPQGGQRSGAPRD. Composition is skewed to gly residues over residues 234–252 and 290–333; these read GQGG…GPRP and GKGG…GRPG. Positions 337–346 are enriched in basic residues; that stretch reads RRGRKSKRQK. Residues 459-631 enclose the tr-type G domain; the sequence is KRPPVVTVMG…VCLTADAELD (173 aa). The interval 468 to 475 is G1; the sequence is GHVDHGKT. 468–475 is a GTP binding site; sequence GHVDHGKT. The interval 493–497 is G2; the sequence is GITQG. The segment at 518–521 is G3; that stretch reads DTPG. GTP is bound by residues 518–522 and 572–575; these read DTPGH and NKID. A G4 region spans residues 572-575; that stretch reads NKID. Residues 608-610 form a G5 region; sequence SAK.

The protein belongs to the TRAFAC class translation factor GTPase superfamily. Classic translation factor GTPase family. IF-2 subfamily.

The protein localises to the cytoplasm. Functionally, one of the essential components for the initiation of protein synthesis. Protects formylmethionyl-tRNA from spontaneous hydrolysis and promotes its binding to the 30S ribosomal subunits. Also involved in the hydrolysis of GTP during the formation of the 70S ribosomal complex. The polypeptide is Translation initiation factor IF-2 (Corynebacterium efficiens (strain DSM 44549 / YS-314 / AJ 12310 / JCM 11189 / NBRC 100395)).